We begin with the raw amino-acid sequence, 274 residues long: Endonuclease 8-like L720 (274 aa).

An FPG-type; degenerate zinc finger spans residues 241–274 (RIYRKSLCPLGHKTIRKKIGLRNRMTTWCPVCQL).

It belongs to the FPG family.

In Acanthamoeba polyphaga mimivirus (APMV), this protein is Endonuclease 8-like L720.